The chain runs to 627 residues: tRNA uridine 5-carboxymethylaminomethyl modification enzyme MnmG (627 aa).

14–19 serves as a coordination point for FAD; that stretch reads GAGHAG. An NAD(+)-binding site is contributed by 275–289; it reads GPRYCPSIEDKVVKF.

The protein belongs to the MnmG family. Homodimer. Heterotetramer of two MnmE and two MnmG subunits. The cofactor is FAD.

The protein resides in the cytoplasm. Functionally, NAD-binding protein involved in the addition of a carboxymethylaminomethyl (cmnm) group at the wobble position (U34) of certain tRNAs, forming tRNA-cmnm(5)s(2)U34. The protein is tRNA uridine 5-carboxymethylaminomethyl modification enzyme MnmG of Lachnoclostridium phytofermentans (strain ATCC 700394 / DSM 18823 / ISDg) (Clostridium phytofermentans).